The sequence spans 257 residues: Zinc transporter ZupT (257 aa).

3 helical membrane-spanning segments follow: residues L5 to G25, L32 to M52, and G61 to L81. N120 and E123 together coordinate Fe(2+). Positions 123 and 148 each coordinate Zn(2+). The next 4 helical transmembrane spans lie at L137–A157, I171–I191, M195–L215, and G236–I256. 3 residues coordinate Fe(2+): N149, E152, and E181. A Zn(2+)-binding site is contributed by E152.

This sequence belongs to the ZIP transporter (TC 2.A.5) family. ZupT subfamily.

It is found in the cell inner membrane. The enzyme catalyses Zn(2+)(in) = Zn(2+)(out). Functionally, mediates zinc uptake. May also transport other divalent cations. In Escherichia coli O7:K1 (strain IAI39 / ExPEC), this protein is Zinc transporter ZupT.